The following is a 273-amino-acid chain: uncharacterized protein (273 aa).

The chain crosses the membrane as a helical span at residues 7–25; sequence FFRWAFLIATVYVAYYFLV. Disordered stretches follow at residues 34–154 and 168–273; these read KPQK…LKMK and LHNS…DSLW. Basic residues predominate over residues 36–54; sequence QKSKLTKLGKQKQRQKQKN. A compositionally biased stretch (basic and acidic residues) spans 55 to 91; it reads TKKDTLVNRETPSKKSQKLETSDALKSKSKDSSKKEP. Residues 92 to 101 are compositionally biased toward low complexity; that stretch reads VVVPKKGTPK. Basic and acidic residues predominate over residues 115 to 144; that stretch reads PKKEKLVGKNPAEKEDTTDVEDTQKLEQKH. The span at 145–154 shows a compositional bias: polar residues; sequence STTPSSLKMK. Residues 201–212 are compositionally biased toward basic residues; it reads KRQRQNQQKKLR. Over residues 213–240 the composition is skewed to basic and acidic residues; it reads AKEMQELADEEQRRRLAAHRKELHEANR. A compositionally biased stretch (polar residues) spans 245-266; that stretch reads LNNSSRSAYSYINNGQAGSSKG.

The protein resides in the cytoplasm. The protein localises to the membrane. This is an uncharacterized protein from Schizosaccharomyces pombe (strain 972 / ATCC 24843) (Fission yeast).